The chain runs to 95 residues: Aspartyl/glutamyl-tRNA(Asn/Gln) amidotransferase subunit C (95 aa).

The protein belongs to the GatC family. As to quaternary structure, heterotrimer of A, B and C subunits.

It carries out the reaction L-glutamyl-tRNA(Gln) + L-glutamine + ATP + H2O = L-glutaminyl-tRNA(Gln) + L-glutamate + ADP + phosphate + H(+). The enzyme catalyses L-aspartyl-tRNA(Asn) + L-glutamine + ATP + H2O = L-asparaginyl-tRNA(Asn) + L-glutamate + ADP + phosphate + 2 H(+). Allows the formation of correctly charged Asn-tRNA(Asn) or Gln-tRNA(Gln) through the transamidation of misacylated Asp-tRNA(Asn) or Glu-tRNA(Gln) in organisms which lack either or both of asparaginyl-tRNA or glutaminyl-tRNA synthetases. The reaction takes place in the presence of glutamine and ATP through an activated phospho-Asp-tRNA(Asn) or phospho-Glu-tRNA(Gln). In Rhodopseudomonas palustris (strain ATCC BAA-98 / CGA009), this protein is Aspartyl/glutamyl-tRNA(Asn/Gln) amidotransferase subunit C.